Consider the following 452-residue polypeptide: Probable glycine dehydrogenase (decarboxylating) subunit 1 (452 aa).

This sequence belongs to the GcvP family. N-terminal subunit subfamily. As to quaternary structure, the glycine cleavage system is composed of four proteins: P, T, L and H. In this organism, the P 'protein' is a heterodimer of two subunits.

It carries out the reaction N(6)-[(R)-lipoyl]-L-lysyl-[glycine-cleavage complex H protein] + glycine + H(+) = N(6)-[(R)-S(8)-aminomethyldihydrolipoyl]-L-lysyl-[glycine-cleavage complex H protein] + CO2. Its function is as follows. The glycine cleavage system catalyzes the degradation of glycine. The P protein binds the alpha-amino group of glycine through its pyridoxal phosphate cofactor; CO(2) is released and the remaining methylamine moiety is then transferred to the lipoamide cofactor of the H protein. This chain is Probable glycine dehydrogenase (decarboxylating) subunit 1, found in Sphingopyxis alaskensis (strain DSM 13593 / LMG 18877 / RB2256) (Sphingomonas alaskensis).